Consider the following 282-residue polypeptide: MIVFISLFTLFLTLLSILTNNVIVWWSIFLLMTVVFILLNKSSKSYTSIFNYFVIQESLGLLFLLCSGGLLQFFIILLKIGVAPLHFWIFNVTNNIFNYGLMWFLTFQKLPFLTILLQIFWLSSVYILLFGLLICYVQIFVMKSYKNLLIISSTESFNWIVLGVFFSMFNTFYLFIYYFVLMVLLISKFSKTSGYNFINWETTLVFLNIPFSVSFFVKIFSLSEIFKYDSFFTLFLLFTMFLSVLAFSFWLINLSMKNNEETSNNNKMNYFIIFPLMVISII.

The next 7 helical transmembrane spans lie at 17–37 (ILTNNVIVWWSIFLLMTVVFI), 58–78 (SLGLLFLLCSGGLLQFFIILL), 87–107 (FWIFNVTNNIFNYGLMWFLTF), 115–135 (ILLQIFWLSSVYILLFGLLIC), 166–186 (FSMFNTFYLFIYYFVLMVLLI), 202–222 (TTLVFLNIPFSVSFFVKIFSL), and 232–252 (FTLFLLFTMFLSVLAFSFWLI).

Belongs to the complex I subunit 2 family.

It localises to the mitochondrion inner membrane. It catalyses the reaction a ubiquinone + NADH + 5 H(+)(in) = a ubiquinol + NAD(+) + 4 H(+)(out). Functionally, core subunit of the mitochondrial membrane respiratory chain NADH dehydrogenase (Complex I) that is believed to belong to the minimal assembly required for catalysis. Complex I functions in the transfer of electrons from NADH to the respiratory chain. The immediate electron acceptor for the enzyme is believed to be ubiquinone. This chain is NADH-ubiquinone oxidoreductase chain 2, found in Caenorhabditis elegans.